A 649-amino-acid polypeptide reads, in one-letter code: MSHIIELPEMLANQIAAGEVIERPASVVKELVENAIDAGSSQIIIEIEEAGLKKIQITDNGHGIAHDEVELALRRHATSKIKNQADLFRIRTLGFRGEALPSIASVSVLTLLTAVDGASHGTKLVARGGEVEEVIPATSPVGTKVCVEDLFFNTPARLKYMKSQQAELSHIIDIVNRLGLAHPEISFSLISDGKEMTRTAGTGQLRQAIAGIYGLVSAKKMIEIENSDLDFEISGFVSLPELTRANRNYISLFINGRYIKNFLLNRAILDGFGSKLMVGRFPLAVIHIHIDPYLADVNVHPTKQEVRISKEKELMALVSEAIANSLKEQTLIPDALENLAKSTVRNREKVEQTILPLKENTFYYEKTEPSRPSQTEVADYQVELTDEGQDLTLFAKETLDRLTKPAKLHFAERKPANYDQLDHPELDLASIDKAYDKLEREEASSFPELEFFGQMHGTYLFAQGRDGLYIIDQHAAQERVKYEEYRESIGNVDQSQQQLLVPYIFEFPADDALRLKERMPLLEEVGVFLAEYGENQFILREHPIWMAEEEIESGIYEMCDMLLLTKEVSIKKYRAELAIMMSCKRSIKANHRIDDHSARQLLYQLSQCDNPYNCPHGRPVLVHFTKSDMEKMFRRIQENHTSLRELGKY.

Belongs to the DNA mismatch repair MutL/HexB family.

Functionally, this protein is involved in the repair of mismatches in DNA. It is required for dam-dependent methyl-directed DNA mismatch repair. May act as a 'molecular matchmaker', a protein that promotes the formation of a stable complex between two or more DNA-binding proteins in an ATP-dependent manner without itself being part of a final effector complex. In Streptococcus pneumoniae serotype 19F (strain G54), this protein is DNA mismatch repair protein MutL.